The sequence spans 335 residues: Zinc-type alcohol dehydrogenase-like protein SAR2277 (335 aa).

The protein belongs to the zinc-containing alcohol dehydrogenase family. Quinone oxidoreductase subfamily.

This Staphylococcus aureus (strain MRSA252) protein is Zinc-type alcohol dehydrogenase-like protein SAR2277.